Here is a 157-residue protein sequence, read N- to C-terminus: Nuclear cap-binding protein subunit 2 (157 aa).

MRNA-binding positions include Y17, Y40, 109 to 113, 120 to 124, and 130 to 131; these read RADWD, RQYGR, and QV. The 79-residue stretch at 37-115 folds into the RRM domain; sequence CTLYVGNLSY…RVIRADWDAG (79 aa).

Belongs to the RRM NCBP2 family. Component of the nuclear cap-binding complex (CBC), a heterodimer composed of ncbp-1 and ncbp-2 that interacts with m7GpppG-capped RNA.

Its subcellular location is the nucleus. Its function is as follows. Component of the cap-binding complex (CBC), which binds co-transcriptionally to the 5' cap of pre-mRNAs and is involved in various processes such as pre-mRNA splicing and RNA-mediated gene silencing (RNAi). The CBC complex is involved in miRNA-mediated RNA interference and is required for primary microRNAs (miRNAs) processing. In the CBC complex, ncbp-2 recognizes and binds capped RNAs (m7GpppG-capped RNA) but requires ncbp-1 to stabilize the movement of its N-terminal loop and lock the CBC into a high affinity cap-binding state with the cap structure. In Caenorhabditis briggsae, this protein is Nuclear cap-binding protein subunit 2 (ncbp-2).